Consider the following 103-residue polypeptide: Small ribosomal subunit protein uS10 (103 aa).

The protein belongs to the universal ribosomal protein uS10 family. As to quaternary structure, part of the 30S ribosomal subunit.

Involved in the binding of tRNA to the ribosomes. In Thioalkalivibrio sulfidiphilus (strain HL-EbGR7), this protein is Small ribosomal subunit protein uS10.